Here is a 121-residue protein sequence, read N- to C-terminus: Large ribosomal subunit protein bL19 (121 aa).

Belongs to the bacterial ribosomal protein bL19 family.

Its function is as follows. This protein is located at the 30S-50S ribosomal subunit interface and may play a role in the structure and function of the aminoacyl-tRNA binding site. The chain is Large ribosomal subunit protein bL19 (rplS) from Chlamydia pneumoniae (Chlamydophila pneumoniae).